The chain runs to 466 residues: Phosphomethylpyrimidine synthase (466 aa).

Residues Asn80, Met109, Tyr139, His175, 195–197 (SRG), 236–239 (DSLR), and Glu275 each bind substrate. Zn(2+) is bound at residue His279. Tyr302 contributes to the substrate binding site. His343 contacts Zn(2+). Positions 423, 426, and 431 each coordinate [4Fe-4S] cluster.

It belongs to the ThiC family. [4Fe-4S] cluster serves as cofactor.

It catalyses the reaction 5-amino-1-(5-phospho-beta-D-ribosyl)imidazole + S-adenosyl-L-methionine = 4-amino-2-methyl-5-(phosphooxymethyl)pyrimidine + CO + 5'-deoxyadenosine + formate + L-methionine + 3 H(+). The protein operates within cofactor biosynthesis; thiamine diphosphate biosynthesis. In terms of biological role, catalyzes the synthesis of the hydroxymethylpyrimidine phosphate (HMP-P) moiety of thiamine from aminoimidazole ribotide (AIR) in a radical S-adenosyl-L-methionine (SAM)-dependent reaction. This chain is Phosphomethylpyrimidine synthase, found in Prochlorococcus marinus (strain NATL2A).